The sequence spans 76 residues: Small ribosomal subunit protein bS16 (76 aa).

This sequence belongs to the bacterial ribosomal protein bS16 family.

The chain is Small ribosomal subunit protein bS16 from Helicobacter acinonychis (strain Sheeba).